The following is an 862-amino-acid chain: MSSPASTPSRRSSRRGRVTPTQSLRSEESRSSPNRRRRGEDSSTGELLPMPTSPGADLQSPPAQNALFSSPPQMHSLAIPLDFDVSSPLTYGTPSSRVEGTPRSGVRGTPVRQRPDLGSARKGLQVDLQSDGAAAEDIVPSEQSLGQKLVIWGTDVNVATCKENFQRFLQCFTDPLAKEEENVGIDITQPLYMQQLGEINITGEPFLNVNCEHIKSFSKNLYRQLISYPQEVIPTFDMAVNEIFFDRYPDSILEHQIQVRPFNALKTKSMRNLNPEDIDQLITISGMVIRTSQLIPEMQEAFFQCQVCAHTTRVEIDRGRIAEPCSCVHCHTTHSMALIHNRSFFSDKQMIKLQESPEDMPAGQTPHTIVLFAHNDLVDKVQPGDRVNVTGIYRAVPIRVNPRVSNVKSVYKTHIDVIHYRKTDAKRLHGLDEEAEQKLFSEKRVKLLKELSRKPDIYERLASALAPSIYEHEDIKKGILLQLFGGTRKDFSHTGRGKFRAEINILLCGDPGTSKSQLLQYVYNLVPRGQYTSGKGSSAVGLTAYVMKDPETRQLVLQTGALVLSDNGICCIDEFDKMNESTRSVLHEVMEQQTLSIAKAGIICQLNARTSVLAAANPIESQWNPKKTTIENIQLPHTLLSRFDLIFLMLDPQDEAYDRRLAHHLVSLYYQSEEQVEEEFLDMAVLKDYIAYAHSTIMPRLSEEASQALIEAYVNMRKIGSSRGMVSAYPRQLESLIRLAEAHAKVRFSNKVEAIDVEEAKRLHREALKQSATDPRTGIVDISILTTGMSATSRKRKEELAEALRKLILSKGKTPALKYQQLFEDIRGQSDTAITKDMFEEALRALADDDFLTVTGKTVRLL.

Residues methionine 1 to arginine 10 show a composition bias toward low complexity. Disordered regions lie at residues methionine 1–proline 71 and threonine 90–arginine 121. Residue serine 2 is modified to N-acetylserine. Position 6 is a phosphoserine (serine 6). Phosphothreonine occurs at positions 7 and 19. 3 positions are modified to phosphoserine: serine 26, serine 31, and serine 32. Residues proline 61–proline 71 are compositionally biased toward polar residues. The residue at position 101 (threonine 101) is a Phosphothreonine. The residue at position 104 (serine 104) is a Phosphoserine. A Phosphothreonine modification is found at threonine 109. Phosphoserine is present on residues serine 119, serine 130, serine 141, and serine 144. Residue lysine 219 is modified to N6-acetyllysine. A Glycyl lysine isopeptide (Lys-Gly) (interchain with G-Cter in SUMO2) cross-link involves residue lysine 438. Position 449 is an N6-acetyllysine (lysine 449). The MCM domain maps to isoleucine 457–valine 666. Residues tyrosine 470, arginine 496, lysine 515, serine 516, asparagine 617, arginine 642, arginine 731, and glutamate 734 each coordinate ATP. The Arginine finger motif lies at serine 641–aspartate 644. A Glycyl lysine isopeptide (Lys-Gly) (interchain with G-Cter in SUMO2) cross-link involves residue lysine 797. Lysine 857 carries the N6-acetyllysine modification.

The protein belongs to the MCM family. As to quaternary structure, component of the MCM2-7 complex. The complex forms a toroidal hexameric ring with the proposed subunit order MCM2-MCM6-MCM4-MCM7-MCM3-MCM5. Component of the CMG helicase complex, a hexameric ring of related MCM2-7 subunits stabilized by CDC45 and the tetrameric GINS complex. Interacts with MCMBP. Sumoylated; SUMO2 modified in response to stress caused by inhibition of proteasome activity (in vitro).

It localises to the nucleus. The protein localises to the chromosome. It catalyses the reaction ATP + H2O = ADP + phosphate + H(+). Its function is as follows. Acts as a component of the MCM2-7 complex (MCM complex) which is the replicative helicase essential for 'once per cell cycle' DNA replication initiation and elongation in eukaryotic cells. Core component of CDC45-MCM-GINS (CMG) helicase, the molecular machine that unwinds template DNA during replication, and around which the replisome is built. The active ATPase sites in the MCM2-7 ring are formed through the interaction surfaces of two neighboring subunits such that a critical structure of a conserved arginine finger motif is provided in trans relative to the ATP-binding site of the Walker A box of the adjacent subunit. The six ATPase active sites, however, are likely to contribute differentially to the complex helicase activity. This chain is DNA replication licensing factor MCM4 (Mcm4), found in Mus musculus (Mouse).